The following is a 712-amino-acid chain: Secretin OutD (712 aa).

An N-terminal signal peptide occupies residues M1–A27. The tract at residues A28–G124 is N0. The segment at E126–G190 is N1. Residues D191–V264 are N2. Residues G267–D394 form an N3 region. Residues G288 to G342 form a disordered region. Residues Q399–D651 form a secretin region. The interval Q653–R712 is s domain.

Belongs to the bacterial secretin family. GSP D subfamily. As to quaternary structure, forms a cylindrical channel with 15 subunits.

It localises to the cell outer membrane. In terms of biological role, involved in a type II secretion system (T2SS, formerly general secretion pathway, GSP) for the export of proteins. Required for the translocation of the multiple pectic enzymes. This subunit forms the outer membrane channel. In Dickeya chrysanthemi (Pectobacterium chrysanthemi), this protein is Secretin OutD (outD).